The following is a 347-amino-acid chain: 3-isopropylmalate dehydrogenase (347 aa).

Residue 76–87 coordinates NAD(+); it reads GPKWTDPNNRPE. Substrate contacts are provided by R94, R104, R132, and D217. Mg(2+) contacts are provided by D217, D241, and D245. 275–287 is an NAD(+) binding site; it reads GSAPDIANEDKAN.

Belongs to the isocitrate and isopropylmalate dehydrogenases family. LeuB type 1 subfamily. As to quaternary structure, homodimer. Mg(2+) is required as a cofactor. It depends on Mn(2+) as a cofactor.

It is found in the cytoplasm. The enzyme catalyses (2R,3S)-3-isopropylmalate + NAD(+) = 4-methyl-2-oxopentanoate + CO2 + NADH. The protein operates within amino-acid biosynthesis; L-leucine biosynthesis; L-leucine from 3-methyl-2-oxobutanoate: step 3/4. In terms of biological role, catalyzes the oxidation of 3-carboxy-2-hydroxy-4-methylpentanoate (3-isopropylmalate) to 3-carboxy-4-methyl-2-oxopentanoate. The product decarboxylates to 4-methyl-2 oxopentanoate. This is 3-isopropylmalate dehydrogenase from Staphylococcus epidermidis (strain ATCC 12228 / FDA PCI 1200).